Here is a 735-residue protein sequence, read N- to C-terminus: Diacylglycerol kinase alpha (735 aa).

EF-hand domains are found at residues 110–145 and 155–190; these read RPED…MMRV and ELRP…TVPL. Residues Asp123, Asp125, Asn127, Glu134, Asp168, Asp170, Ser172, Ser174, and Glu179 each coordinate Ca(2+). Phorbol-ester/DAG-type zinc fingers lie at residues 205–253 and 269–319; these read QHMW…ALPC and SHVW…GHEC. The DAGKc domain maps to 372–506; sequence PNTHPLLVFV…MDRWSVEVIP (135 aa). Lys484 carries the post-translational modification N6-acetyllysine.

This sequence belongs to the eukaryotic diacylglycerol kinase family. In terms of assembly, monomer. Expressed in lymphocytes.

Its subcellular location is the cytoplasm. The protein localises to the cytosol. It carries out the reaction a 1,2-diacyl-sn-glycerol + ATP = a 1,2-diacyl-sn-glycero-3-phosphate + ADP + H(+). The enzyme catalyses a 1-O-alkyl-sn-glycerol + ATP = a 1-O-alkyl-sn-glycero-3-phosphate + ADP + H(+). The catalysed reaction is 1-O-alkyl-2-acyl-sn-glycerol + ATP = 1-O-alkyl-2-acyl-sn-glycero-3-phosphate + ADP + H(+). It catalyses the reaction 1,2-dihexadecanoyl-sn-glycerol + ATP = 1,2-dihexadecanoyl-sn-glycero-3-phosphate + ADP + H(+). It carries out the reaction 1-hexadecanoyl-2-(9Z-octadecenoyl)-sn-glycerol + ATP = 1-hexadecanoyl-2-(9Z-octadecenoyl)-sn-glycero-3-phosphate + ADP + H(+). The enzyme catalyses 2-(9Z-octadecenoyl)-glycerol + ATP = 2-(9Z-octadecenoyl)-sn-glycero-3-phosphate + ADP + H(+). The catalysed reaction is 1,2-di-(9Z-octadecenoyl)-sn-glycerol + ATP = 1,2-di-(9Z-octadecenoyl)-sn-glycero-3-phosphate + ADP + H(+). It catalyses the reaction 1-octadecanoyl-2-(5Z,8Z,11Z,14Z-eicosatetraenoyl)-sn-glycerol + ATP = 1-octadecanoyl-2-(5Z,8Z,11Z,14Z-eicosatetraenoyl)-sn-glycero-3-phosphate + ADP + H(+). It carries out the reaction 1,2-didecanoyl-sn-glycerol + ATP = 1,2-didecanoyl-sn-glycero-3-phosphate + ADP + H(+). The enzyme catalyses 1-O-hexadecyl-2-acetyl-sn-glycerol + ATP = 1-O-hexadecyl-2-acetyl-sn-glycero-3-phosphate + ADP + H(+). The catalysed reaction is 1-O-hexadecyl-2-(5Z,8Z,11Z,14Z-eicosatetraenoyl)-sn-glycerol + ATP = 1-O-hexadecyl-2-(5Z,8Z,11Z,14Z-eicosatetraenoyl)-sn-glycero-3-phosphate + ADP + H(+). It catalyses the reaction 1-O-hexadecyl-2-(9Z-octadecenoyl)-sn-glycerol + ATP = 1-O-hexadecyl-2-(9Z-octadecenoyl)-sn-glycero-3-phosphate + ADP + H(+). It carries out the reaction 1-O-hexadecyl-sn-glycerol + ATP = 1-O-hexadecyl-sn-glycero-3-phosphate + ADP + H(+). It functions in the pathway lipid metabolism; glycerolipid metabolism. Its activity is regulated as follows. Stimulated by calcium and phosphatidylserine. Its function is as follows. Diacylglycerol kinase that converts diacylglycerol/DAG into phosphatidic acid/phosphatidate/PA and regulates the respective levels of these two bioactive lipids. Thereby, acts as a central switch between the signaling pathways activated by these second messengers with different cellular targets and opposite effects in numerous biological processes. Also plays an important role in the biosynthesis of complex lipids. Can also phosphorylate 1-alkyl-2-acylglycerol in vitro as efficiently as diacylglycerol provided it contains an arachidonoyl group. Also involved in the production of alkyl-lysophosphatidic acid, another bioactive lipid, through the phosphorylation of 1-alkyl-2-acetyl glycerol. The polypeptide is Diacylglycerol kinase alpha (DGKA) (Homo sapiens (Human)).